The following is a 291-amino-acid chain: Probable alpha-L-glutamate ligase (291 aa).

In terms of domain architecture, ATP-grasp spans 104–287; that stretch reads HQLLASQGID…VAGTIIQHLE (184 aa). ATP contacts are provided by residues lysine 141, 178–179, aspartate 187, and 211–213; these read EF and RSN. Residues aspartate 248, glutamate 260, and asparagine 262 each coordinate Mg(2+). Mn(2+) is bound by residues aspartate 248, glutamate 260, and asparagine 262.

It belongs to the RimK family. It depends on Mg(2+) as a cofactor. Mn(2+) is required as a cofactor.

In Xanthomonas campestris pv. campestris (strain 8004), this protein is Probable alpha-L-glutamate ligase.